The following is a 314-amino-acid chain: Porphobilinogen deaminase (314 aa).

Cys234 bears the S-(dipyrrolylmethanemethyl)cysteine mark.

Belongs to the HMBS family. Monomer. Dipyrromethane is required as a cofactor.

It carries out the reaction 4 porphobilinogen + H2O = hydroxymethylbilane + 4 NH4(+). It functions in the pathway porphyrin-containing compound metabolism; protoporphyrin-IX biosynthesis; coproporphyrinogen-III from 5-aminolevulinate: step 2/4. In terms of biological role, tetrapolymerization of the monopyrrole PBG into the hydroxymethylbilane pre-uroporphyrinogen in several discrete steps. The protein is Porphobilinogen deaminase of Mycobacterium ulcerans (strain Agy99).